The chain runs to 351 residues: Mitogen-activated protein kinase 2 (351 aa).

The Protein kinase domain maps to 16–304 (YEILDVIGEG…AEEALQHNYL (289 aa)). ATP is bound by residues 22–30 (IGEGAYGIV) and lysine 45. The Proton acceptor role is filled by aspartate 140. A Phosphothreonine modification is found at threonine 176. Positions 176-178 (TEY) match the TXY motif. Tyrosine 178 bears the Phosphotyrosine mark.

Belongs to the protein kinase superfamily. CMGC Ser/Thr protein kinase family. MAP kinase subfamily. Mg(2+) serves as cofactor. Mn(2+) is required as a cofactor. In terms of processing, dually phosphorylated on Thr-176 and Tyr-178, which activates the enzyme.

It localises to the nucleus. It carries out the reaction L-seryl-[protein] + ATP = O-phospho-L-seryl-[protein] + ADP + H(+). It catalyses the reaction L-threonyl-[protein] + ATP = O-phospho-L-threonyl-[protein] + ADP + H(+). Its activity is regulated as follows. Activated by tyrosine and threonine phosphorylation. Inhibited by the MEK inhibitor U0126 but not by the p38 inhibitor SB203580. Cobalt abolishes kinase activity, while calcium, copper and nickel have little effect on kinase activity. In terms of biological role, serine-threonine protein kinase which may be involved in pheromone signaling. Functionally complements the MAPK pheromone signaling pathway in S.cerevisiae. The protein is Mitogen-activated protein kinase 2 of Pneumocystis carinii.